We begin with the raw amino-acid sequence, 421 residues long: Medium-chain specific acyl-CoA dehydrogenase, mitochondrial (421 aa).

Residues 1–25 (MAAAFGRCCRVLRSISRFHWRSQHT) constitute a mitochondrion transit peptide. At Lys69 the chain carries N6-acetyllysine; alternate. Residue Lys69 is modified to N6-succinyllysine; alternate. 158–167 (YCVTEPGAGS) serves as a coordination point for FAD. Residue Ser167 participates in octanoyl-CoA binding. Lys179 bears the N6-succinyllysine mark. 191–193 (WIT) provides a ligand contact to FAD. Lys212, Lys217, Lys259, and Lys271 each carry N6-acetyllysine; alternate. 4 positions are modified to N6-succinyllysine; alternate: Lys212, Lys217, Lys259, and Lys271. Octanoyl-CoA is bound at residue Asp278. At Lys279 the chain carries N6-acetyllysine. Arg281 lines the octanoyl-CoA pocket. Lys301 bears the N6-acetyllysine mark. FAD contacts are provided by residues 306–308 (RKT) and 316–317 (HQ). Residues Arg349 and Thr351 each contribute to the octanoyl-CoA site. Thr351 carries the post-translational modification Phosphothreonine. Position 374-378 (374-378 (QIFGG)) interacts with FAD. Residue Glu401 coordinates octanoyl-CoA. Catalysis depends on Glu401, which acts as the Proton acceptor. 402–405 (GTSQ) contacts FAD.

The protein belongs to the acyl-CoA dehydrogenase family. Homotetramer. Interacts with the heterodimeric electron transfer flavoprotein ETF. The cofactor is FAD. Acetylated. Could occur at proximity of the cofactor-binding sites and reduce the catalytic activity. Could be deacetylated by SIRT3.

The protein localises to the mitochondrion matrix. It catalyses the reaction a medium-chain 2,3-saturated fatty acyl-CoA + oxidized [electron-transfer flavoprotein] + H(+) = a medium-chain (2E)-enoyl-CoA + reduced [electron-transfer flavoprotein]. The catalysed reaction is pentanoyl-CoA + oxidized [electron-transfer flavoprotein] + H(+) = (2E)-pentenoyl-CoA + reduced [electron-transfer flavoprotein]. The enzyme catalyses hexanoyl-CoA + oxidized [electron-transfer flavoprotein] + H(+) = (2E)-hexenoyl-CoA + reduced [electron-transfer flavoprotein]. It carries out the reaction octanoyl-CoA + oxidized [electron-transfer flavoprotein] + H(+) = (2E)-octenoyl-CoA + reduced [electron-transfer flavoprotein]. It catalyses the reaction decanoyl-CoA + oxidized [electron-transfer flavoprotein] + H(+) = (2E)-decenoyl-CoA + reduced [electron-transfer flavoprotein]. The catalysed reaction is dodecanoyl-CoA + oxidized [electron-transfer flavoprotein] + H(+) = (2E)-dodecenoyl-CoA + reduced [electron-transfer flavoprotein]. The enzyme catalyses tetradecanoyl-CoA + oxidized [electron-transfer flavoprotein] + H(+) = (2E)-tetradecenoyl-CoA + reduced [electron-transfer flavoprotein]. It carries out the reaction oxidized [electron-transfer flavoprotein] + hexadecanoyl-CoA + H(+) = (2E)-hexadecenoyl-CoA + reduced [electron-transfer flavoprotein]. It functions in the pathway lipid metabolism; mitochondrial fatty acid beta-oxidation. Its function is as follows. Medium-chain specific acyl-CoA dehydrogenase is one of the acyl-CoA dehydrogenases that catalyze the first step of mitochondrial fatty acid beta-oxidation, an aerobic process breaking down fatty acids into acetyl-CoA and allowing the production of energy from fats. The first step of fatty acid beta-oxidation consists in the removal of one hydrogen from C-2 and C-3 of the straight-chain fatty acyl-CoA thioester, resulting in the formation of trans-2-enoyl-CoA. Electron transfer flavoprotein (ETF) is the electron acceptor that transfers electrons to the main mitochondrial respiratory chain via ETF-ubiquinone oxidoreductase (ETF dehydrogenase). Among the different mitochondrial acyl-CoA dehydrogenases, medium-chain specific acyl-CoA dehydrogenase acts specifically on acyl-CoAs with saturated 6 to 12 carbons long primary chains. The chain is Medium-chain specific acyl-CoA dehydrogenase, mitochondrial from Macaca fascicularis (Crab-eating macaque).